Consider the following 333-residue polypeptide: Acetyltransferase Pat (333 aa).

Residues 85–88 (GEIA), 95–96 (RT), and Arg135 contribute to the 3',5'-cyclic AMP site. The region spanning 153 to 317 (FYLRPVLPGD…DTVPFEPELI (165 aa)) is the N-acetyltransferase domain. Glu211 lines the Mg(2+) pocket. Residues 237-239 (FTV), 245-250 (GRGIGS), Asn276, and Arg285 each bind substrate.

As to quaternary structure, homodimer. It depends on Mg(2+) as a cofactor.

Its activity is regulated as follows. Allosterically regulated by cAMP. Catalyzes specifically the acetylation of the epsilon-amino group of a highly conserved lysine residue in acetyl-CoA synthetase (ACS) and of the universal stress protein (USP) MSMEG_4207. Acetylation results in the inactivation of ACS activity and could be important for mycobacteria to adjust to environmental changes. The sequence is that of Acetyltransferase Pat from Mycolicibacterium smegmatis (strain ATCC 700084 / mc(2)155) (Mycobacterium smegmatis).